Here is a 1370-residue protein sequence, read N- to C-terminus: DNA-directed RNA polymerase subunit beta (1370 aa).

The protein belongs to the RNA polymerase beta chain family. As to quaternary structure, the RNAP catalytic core consists of 2 alpha, 1 beta, 1 beta' and 1 omega subunit. When a sigma factor is associated with the core the holoenzyme is formed, which can initiate transcription.

It catalyses the reaction RNA(n) + a ribonucleoside 5'-triphosphate = RNA(n+1) + diphosphate. Functionally, DNA-dependent RNA polymerase catalyzes the transcription of DNA into RNA using the four ribonucleoside triphosphates as substrates. This Bordetella parapertussis (strain 12822 / ATCC BAA-587 / NCTC 13253) protein is DNA-directed RNA polymerase subunit beta.